The sequence spans 949 residues: MAM domain-containing glycosylphosphatidylinositol anchor protein 2 (949 aa).

Residues 1–25 (MDLVYGLVWLLTVLLEGISGQGVYA) form the signal peptide. Ig-like domains are found at residues 27-127 (PTVR…IRVD) and 134-232 (PVVT…KMVS). 2 disulfide bridges follow: C62/C110 and C159/C216. N92, N213, and N237 each carry an N-linked (GlcNAc...) asparagine glycan. Ig-like domains lie at 242-328 (PSIK…NIIV), 340-436 (PDPY…VNIS), 442-533 (PNLT…ALVQ), and 540-627 (PAVE…FLVT). 2 cysteine pairs are disulfide-bonded: C264–C310 and C359–C417. N434, N443, N504, N610, and N703 each carry an N-linked (GlcNAc...) asparagine glycan. Disulfide bonds link C465–C515 and C561–C611. Residues 638–738 (DTYNPVWQNR…TIRVIKYTGE (101 aa)) form the Fibronectin type-III domain. Residues 739 to 914 (FHCGFEDGNI…VSIAEGECAK (176 aa)) form the MAM domain. Residue D924 is the site of GPI-anchor amidated aspartate attachment. A propeptide spans 925–949 (GAVGILVHIWLFPVIILISILSPRR) (removed in mature form).

In terms of assembly, interacts (through the Ig-like domains) with NLGN2.

The protein localises to the cell membrane. Functionally, may be involved in cell-cell interactions. This Mus musculus (Mouse) protein is MAM domain-containing glycosylphosphatidylinositol anchor protein 2 (Mdga2).